The chain runs to 801 residues: Quinoprotein glucose dehydrogenase A (801 aa).

The N-terminal stretch at 1 to 33 (MNQPTSRSGLTTFTVIIIGLLALFLLIGGIWLA) is a signal peptide. 4 helical membrane passes run 39-55 (IYYIIAGVLLLIVAWQL), 59-79 (ASTALWFYAALMLGTIIWSVW), 94-108 (ILGILGLWLLVPAVT), and 119-138 (VALSSTLAIAIVLMVYSIFN). The active-site Proton acceptor is D471.

It belongs to the bacterial PQQ dehydrogenase family. In terms of assembly, monomer. It depends on pyrroloquinoline quinone as a cofactor.

It is found in the cell inner membrane. The enzyme catalyses D-glucose + A = D-glucono-1,5-lactone + AH2. In terms of biological role, catalyzes an exceptionally high rate of oxidation of a wide range of aldose sugars, including D-glucose, galactose, arabinose and xylose, and also the disaccharides lactose, cellobiose and maltose. This is Quinoprotein glucose dehydrogenase A (gdhA) from Acinetobacter calcoaceticus.